The sequence spans 224 residues: uncharacterized protein (224 aa).

Residues 203-224 (ELKKKKKKKIKKPKEIRNQKNV) are disordered. The span at 204 to 214 (LKKKKKKKIKK) shows a compositional bias: basic residues. Over residues 215-224 (PKEIRNQKNV) the composition is skewed to basic and acidic residues.

This is an uncharacterized protein from Mycoplasma genitalium (strain ATCC 33530 / DSM 19775 / NCTC 10195 / G37) (Mycoplasmoides genitalium).